We begin with the raw amino-acid sequence, 79 residues long: DNA gyrase inhibitor YacG (79 aa).

Cys7, Cys10, Cys26, and Cys30 together coordinate Zn(2+).

Belongs to the DNA gyrase inhibitor YacG family. Interacts with GyrB. Zn(2+) serves as cofactor.

Its function is as follows. Inhibits all the catalytic activities of DNA gyrase by preventing its interaction with DNA. Acts by binding directly to the C-terminal domain of GyrB, which probably disrupts DNA binding by the gyrase. The sequence is that of DNA gyrase inhibitor YacG from Shewanella pealeana (strain ATCC 700345 / ANG-SQ1).